A 715-amino-acid polypeptide reads, in one-letter code: Coiled-coil domain-containing protein 170 (715 aa).

Coiled coils occupy residues 30–286 (VTRE…AGQQ), 360–418 (ESRD…LVSG), and 478–656 (ENKT…FREV). The tract at residues 355–591 (MDSREESRDR…DLNKSRDQLE (237 aa)) is required for binding to microtubules and Golgi apparatus location.

Binds Golgi-associated microtubules.

It is found in the golgi apparatus. Functionally, plays a role in Golgi-associated microtubules organization and stabilization. This chain is Coiled-coil domain-containing protein 170, found in Homo sapiens (Human).